The sequence spans 86 residues: Stage V sporulation protein S (86 aa).

In terms of biological role, interferes with sporulation at an early stage. Seems to play a positive role in allowing cells to progress beyond stage V of sporulation. The polypeptide is Stage V sporulation protein S (Bacillus subtilis (strain 168)).